A 113-amino-acid chain; its full sequence is Putative pterin-4-alpha-carbinolamine dehydratase (113 aa).

Belongs to the pterin-4-alpha-carbinolamine dehydratase family.

It catalyses the reaction (4aS,6R)-4a-hydroxy-L-erythro-5,6,7,8-tetrahydrobiopterin = (6R)-L-erythro-6,7-dihydrobiopterin + H2O. This Chlorobium limicola (strain DSM 245 / NBRC 103803 / 6330) protein is Putative pterin-4-alpha-carbinolamine dehydratase.